Reading from the N-terminus, the 310-residue chain is Olfactory receptor 2A7 (310 aa).

Residues 1-24 (MGDNITSITEFLLLGFPVGPRIQM) are Extracellular-facing. An N-linked (GlcNAc...) asparagine glycan is attached at Asn4. The helical transmembrane segment at 25 to 48 (LLFGLFSLFYVFTLLGNGTILGLI) threads the bilayer. Topologically, residues 49–56 (SLDSRLHA) are cytoplasmic. The helical transmembrane segment at 57–78 (PMYFFLSHLAVVDIAYACNTVP) threads the bilayer. Over 79–99 (RMLVNLLHPAKPISFAGRMMQ) the chain is Extracellular. A helical transmembrane segment spans residues 100–119 (TFLFSTFAVTECLLLVVMSY). The Cytoplasmic segment spans residues 120–138 (DLYVAICHPLRYLAIMTWR). A helical transmembrane segment spans residues 139–157 (VCITLAVTSWTTGVLLSLI). At 158-194 (HLVLLLPLPFCRPQKIYHFFCEILAVLKLACADTHIN) the chain is on the extracellular side. Residues 195–218 (ENMVLAGAISGLVGPLSTIVVSYM) form a helical membrane-spanning segment. Residues 219–235 (CILCAILQIQSREVQRK) lie on the Cytoplasmic side of the membrane. The chain crosses the membrane as a helical span at residues 236–258 (AFCTCFSHLCVIGLFYGTAIIMY). At 259–271 (VGPRYGNPKEQKK) the chain is on the extracellular side. The chain crosses the membrane as a helical span at residues 272–291 (YLLLFHSLFNPMLNPLICSL). Over 292–310 (RNSEVKNTLKRVLGVERAL) the chain is Cytoplasmic.

The protein belongs to the G-protein coupled receptor 1 family.

The protein localises to the cell membrane. Functionally, odorant receptor. The chain is Olfactory receptor 2A7 (OR2A7) from Homo sapiens (Human).